The sequence spans 274 residues: Glucosamine-6-phosphate deaminase (274 aa).

The Proton acceptor; for enolization step role is filled by Asp72. The For ring-opening step role is filled by Asp141. The Proton acceptor; for ring-opening step role is filled by His143. The active-site For ring-opening step is the Glu148.

This sequence belongs to the glucosamine/galactosamine-6-phosphate isomerase family. As to quaternary structure, homohexamer.

Its subcellular location is the cytoplasm. It carries out the reaction alpha-D-glucosamine 6-phosphate + H2O = beta-D-fructose 6-phosphate + NH4(+). Its pathway is nucleotide-sugar biosynthesis; UDP-N-acetyl-alpha-D-glucosamine biosynthesis; alpha-D-glucosamine 6-phosphate from D-fructose 6-phosphate: step 1/1. Catalyzes the reversible conversion of alpha-D-glucosamine 6-phosphate (GlcN-6P) into beta-D-fructose 6-phosphate (Fru-6P) and ammonium ion, a regulatory reaction step in de novo uridine diphosphate-N-acetyl-alpha-D-glucosamine (UDP-GlcNAc) biosynthesis via hexosamine pathway. This chain is Glucosamine-6-phosphate deaminase, found in Drosophila pseudoobscura pseudoobscura (Fruit fly).